The chain runs to 174 residues: NADH-ubiquinone oxidoreductase chain 6 (174 aa).

A run of 6 helical transmembrane segments spans residues methionine 1–serine 21, serine 24–leucine 44, glycine 47–phenylalanine 67, valine 86–valine 106, glycine 111–glycine 131, and tryptophan 151–alanine 171.

The protein belongs to the complex I subunit 6 family. Core subunit of respiratory chain NADH dehydrogenase (Complex I) which is composed of 45 different subunits.

The protein resides in the mitochondrion inner membrane. The enzyme catalyses a ubiquinone + NADH + 5 H(+)(in) = a ubiquinol + NAD(+) + 4 H(+)(out). Functionally, core subunit of the mitochondrial membrane respiratory chain NADH dehydrogenase (Complex I) which catalyzes electron transfer from NADH through the respiratory chain, using ubiquinone as an electron acceptor. Essential for the catalytic activity and assembly of complex I. The polypeptide is NADH-ubiquinone oxidoreductase chain 6 (MT-ND6) (Pongo abelii (Sumatran orangutan)).